A 53-amino-acid chain; its full sequence is UPF0391 membrane protein Bcen2424_6479 (53 aa).

Helical transmembrane passes span 5–25 (AIIF…GIAA) and 30–50 (IAKI…LLGV).

It belongs to the UPF0391 family.

It localises to the cell membrane. This is UPF0391 membrane protein Bcen2424_6479 from Burkholderia cenocepacia (strain HI2424).